The chain runs to 245 residues: MNGRADFREPNAEVPRPIPHIGPDYIPTEEERRVFAECNDESFWFRSVPLAATSMLITQGLISKGILSSHPKYGSIPKLILACIMGYFAGKLSYVKTCQEKFKKLENSPLGEALRSGQARRSSPPGHYYQKSKYDSSVSGQSSFVTSPAADNIEMLPHYEPIPFSSSMNESAPTGITDHIVQGPDPNLEESPKRKNITYEELRNKNRESYEVSLTQKTDPSVRPMHERVPKKEVKVNKYGDTWDE.

An OCIA domain is found at 1–112 (MNGRADFREP…KKLENSPLGE (112 aa)). Residues Ser-108, Ser-116, Ser-123, and Ser-191 each carry the phosphoserine modification. Disordered regions lie at residues 111-141 (GEALRSGQARRSSPPGHYYQKSKYDSSVSGQ) and 169-245 (NESA…TWDE). 2 stretches are compositionally biased toward basic and acidic residues: residues 190-210 (ESPKRKNITYEELRNKNRESY) and 224-238 (PMHERVPKKEVKVNK).

Belongs to the OCIAD1 family. Interacts with OCIAD2. Interacts with STAT3. In terms of tissue distribution, isoform 1 is highly expressed in many tissues, including testis, brain, placenta, ovary, prostate and mammary gland. Isoform 2 expression is restricted to the central nervous system including brain, cerebellum and spinal cord.

The protein localises to the endosome. In terms of biological role, maintains stem cell potency. Increases STAT3 phosphorylation and controls ERK phosphorylation. May act as a scaffold, increasing STAT3 recruitment onto endosomes. Involved in integrin-mediated cancer cell adhesion and colony formation in ovarian cancer. This is OCIA domain-containing protein 1 from Homo sapiens (Human).